A 207-amino-acid chain; its full sequence is Large ribosomal subunit protein eL13 (207 aa).

Belongs to the eukaryotic ribosomal protein eL13 family. As to quaternary structure, component of the 60S large ribosomal subunit (LSU).

It is found in the cytoplasm. Its function is as follows. Component of the ribosome, a large ribonucleoprotein complex responsible for the synthesis of proteins in the cell. The small ribosomal subunit (SSU) binds messenger RNAs (mRNAs) and translates the encoded message by selecting cognate aminoacyl-transfer RNA (tRNA) molecules. The large subunit (LSU) contains the ribosomal catalytic site termed the peptidyl transferase center (PTC), which catalyzes the formation of peptide bonds, thereby polymerizing the amino acids delivered by tRNAs into a polypeptide chain. The nascent polypeptides leave the ribosome through a tunnel in the LSU and interact with protein factors that function in enzymatic processing, targeting, and the membrane insertion of nascent chains at the exit of the ribosomal tunnel. As part of the LSU, it is probably required for its formation and the maturation of rRNAs. The sequence is that of Large ribosomal subunit protein eL13 (rpl-13) from Caenorhabditis elegans.